The chain runs to 166 residues: Cyclin-dependent kinase 4 inhibitor D (166 aa).

Methionine 1 bears the N-acetylmethionine mark. 4 ANK repeats span residues 41–69, 73–102, 106–135, and 138–166; these read FGKT…SPNV, SGTT…DVNA, TGAL…LHHR, and TGLT…VAPL.

The protein belongs to the CDKN2 cyclin-dependent kinase inhibitor family. Interacts with CDK6.

The protein resides in the nucleus. Its subcellular location is the cytoplasm. Its function is as follows. Interacts strongly with CDK4 and CDK6 and inhibits them. This chain is Cyclin-dependent kinase 4 inhibitor D (CDKN2D), found in Bos taurus (Bovine).